The sequence spans 123 residues: uncharacterized protein (123 aa).

The tract at residues Ser-35–Cys-100 is disordered. Basic and acidic residues predominate over residues Asp-37–Thr-48. Residues Ala-85 to Ser-97 show a composition bias toward low complexity.

This is an uncharacterized protein from Homo sapiens (Human).